A 347-amino-acid chain; its full sequence is UDP-3-O-acylglucosamine N-acyltransferase (347 aa).

His-248 functions as the Proton acceptor in the catalytic mechanism.

The protein belongs to the transferase hexapeptide repeat family. LpxD subfamily. As to quaternary structure, homotrimer.

It carries out the reaction a UDP-3-O-[(3R)-3-hydroxyacyl]-alpha-D-glucosamine + a (3R)-hydroxyacyl-[ACP] = a UDP-2-N,3-O-bis[(3R)-3-hydroxyacyl]-alpha-D-glucosamine + holo-[ACP] + H(+). The protein operates within bacterial outer membrane biogenesis; LPS lipid A biosynthesis. Its function is as follows. Catalyzes the N-acylation of UDP-3-O-acylglucosamine using 3-hydroxyacyl-ACP as the acyl donor. Is involved in the biosynthesis of lipid A, a phosphorylated glycolipid that anchors the lipopolysaccharide to the outer membrane of the cell. This Parasynechococcus marenigrum (strain WH8102) protein is UDP-3-O-acylglucosamine N-acyltransferase.